A 311-amino-acid polypeptide reads, in one-letter code: tRNA pseudouridine synthase B (311 aa).

Position 43 (histidine 43) interacts with substrate. The Nucleophile role is filled by aspartate 48. Tyrosine 76, tyrosine 179, and leucine 200 together coordinate substrate.

The protein belongs to the pseudouridine synthase TruB family. Type 1 subfamily.

It catalyses the reaction uridine(55) in tRNA = pseudouridine(55) in tRNA. Responsible for synthesis of pseudouridine from uracil-55 in the psi GC loop of transfer RNAs. In Sodalis glossinidius (strain morsitans), this protein is tRNA pseudouridine synthase B.